The sequence spans 403 residues: Na(+)/H(+) antiporter NhaA (403 aa).

The next 11 helical transmembrane spans lie at 23-43, 66-86, 101-121, 132-152, 161-181, 184-204, 219-239, 257-277, 297-317, 333-353, and 363-383; these read AFFL…PWAA, VAAW…ILEI, VALP…TYLL, GWAI…LALG, AWLM…IALF, GSMY…LIGA, GILL…AGVI, WVSS…FGFM, LGIM…ATLL, GMLF…LFVA, and IAPA…TGWF.

Belongs to the NhaA Na(+)/H(+) (TC 2.A.33) antiporter family.

Its subcellular location is the cell inner membrane. It carries out the reaction Na(+)(in) + 2 H(+)(out) = Na(+)(out) + 2 H(+)(in). Na(+)/H(+) antiporter that extrudes sodium in exchange for external protons. In Gluconobacter oxydans (strain 621H) (Gluconobacter suboxydans), this protein is Na(+)/H(+) antiporter NhaA.